The following is a 156-amino-acid chain: Transcriptional regulator MraZ (156 aa).

SpoVT-AbrB domains are found at residues 7 to 54 and 84 to 127; these read NIEV…PESV and VEVV…AKER.

It belongs to the MraZ family. Forms oligomers.

It localises to the cytoplasm. The protein localises to the nucleoid. This Bacteroides thetaiotaomicron (strain ATCC 29148 / DSM 2079 / JCM 5827 / CCUG 10774 / NCTC 10582 / VPI-5482 / E50) protein is Transcriptional regulator MraZ.